Consider the following 48-residue polypeptide: Phospholipase A2 superbin d (48 aa).

Residues Tyr28, Gly30, and Gly32 each contribute to the Ca(2+) site. Cys29 and Cys45 form a disulfide bridge. Residue His48 is part of the active site.

Ca(2+) is required as a cofactor. As to expression, expressed by the venom gland.

It is found in the secreted. It catalyses the reaction a 1,2-diacyl-sn-glycero-3-phosphocholine + H2O = a 1-acyl-sn-glycero-3-phosphocholine + a fatty acid + H(+). In terms of biological role, snake venom phospholipase A2 (PLA2) that inhibits collagen-induced platelet aggregation. In terms of inhibition of platelet aggregation, superbin d is less potent as superbin a, b, and c. PLA2 catalyzes the calcium-dependent hydrolysis of the 2-acyl groups in 3-sn-phosphoglycerides. The sequence is that of Phospholipase A2 superbin d from Austrelaps superbus (Lowland copperhead snake).